Reading from the N-terminus, the 300-residue chain is Nuclear egress protein 1 (300 aa).

The CCCH-type zinc finger occupies 90–217 (CLSLSGMGYY…YIVFPGKALH (128 aa)).

Belongs to the herpesviridae NEC1 protein family. In terms of assembly, forms a heterohexameric complex with NEC2. Interacts with capsid vertex specific component 2/CVC2; this interaction directs the capsid to the host inner nuclear membrane to initiate budding. In terms of processing, phosphorylated at serine residues in the N-terminus. This phosphorylation regulates the localization within the inner nuclear membrane.

The protein resides in the host nucleus inner membrane. Its function is as follows. Plays an essential role in virion nuclear egress, the first step of virion release from infected cell. Within the host nucleus, NEC1 interacts with the newly formed capsid through the vertexes and directs it to the inner nuclear membrane by associating with NEC2. Induces the budding of the capsid at the inner nuclear membrane as well as its envelopment into the perinuclear space. There, the NEC1/NEC2 complex promotes the fusion of the enveloped capsid with the outer nuclear membrane and the subsequent release of the viral capsid into the cytoplasm where it will reach the secondary budding sites in the host Golgi or trans-Golgi network. This chain is Nuclear egress protein 1, found in Gallid herpesvirus 2 (strain Chicken/Md5/ATCC VR-987) (GaHV-2).